We begin with the raw amino-acid sequence, 93 residues long: Large ribosomal subunit protein bL31 (93 aa).

The segment at 68–93 (GSADAAADEKKPDAKNNNKDNTSKED) is disordered. A compositionally biased stretch (basic and acidic residues) spans 74–93 (ADEKKPDAKNNNKDNTSKED).

This sequence belongs to the bacterial ribosomal protein bL31 family. Type A subfamily. Part of the 50S ribosomal subunit.

Its function is as follows. Binds the 23S rRNA. The polypeptide is Large ribosomal subunit protein bL31 (Prochlorococcus marinus (strain MIT 9313)).